The following is a 398-amino-acid chain: Mitochondrial protein import protein mas5 (398 aa).

Residues 7 to 88 (GYYKVLELSP…KKKKEYDSGM (82 aa)) enclose the J domain. A CR-type zinc finger spans residues 139 to 219 (GKVSKFNVRT…CNGAEYIQDK (81 aa)). 144–146 (FNV) contributes to the substrate binding site. Positions 152, 155, 166, 169, 192, 195, 207, and 210 each coordinate Zn(2+). 4 CXXCXGXG motif repeats span residues 152–159 (CTTCDGKG), 166–173 (CKKCNGNG), 192–199 (CDGCDGSG), and 207–214 (CSTCNGAE). Residues 221–222 (MF) and 253–255 (VIF) contribute to the substrate site. The disordered stretch occupies residues 367-386 (FGSMPEPERDHEDASEEGAQ).

It belongs to the DnaJ family. As to quaternary structure, homodimer. The cofactor is Zn(2+).

Its subcellular location is the cytoplasm. In terms of biological role, probably involved in mitosomal protein import. This Encephalitozoon cuniculi (strain GB-M1) (Microsporidian parasite) protein is Mitochondrial protein import protein mas5 (MAS5).